The chain runs to 200 residues: QLCLLQPLGSGGFGSVYKATYHGATVAVKQVKKSSKNRLASRQSFWAELNVARLQHANVVRVVAASTCAPASQNSLGTIIMEYVGNITLHHVIYGTSDAWRQGEDDEGGCGKKALSMEETVCYSCDIMTGLAFLHSQGIVHLDLKPANVFITEQGVCKIGDFGCSQKLEDGLSQSPQVCQQGGTYTHRAPELLKGERVTA.

One can recognise a Protein kinase domain in the interval 2–200 (LCLLQPLGSG…ELLKGERVTA (199 aa)). ATP contacts are provided by residues 8 to 16 (LGSGGFGSV) and Lys-29. The active-site Proton acceptor is Asp-143.

It belongs to the protein kinase superfamily. Ser/Thr protein kinase family.

It carries out the reaction L-seryl-[protein] + ATP = O-phospho-L-seryl-[protein] + ADP + H(+). It catalyses the reaction L-threonyl-[protein] + ATP = O-phospho-L-threonyl-[protein] + ADP + H(+). The polypeptide is Serine/threonine-protein kinase mos (MOS) (Apteryx australis (Southern brown kiwi)).